Reading from the N-terminus, the 431-residue chain is MKGRAVYIKTFGCQMNEHDSERMLGILGTKGFIEVDEPKKADIVIFNTCAIRHKAEQKFFSSLGRVKHLKKKNPQLKIIVAGCSAQLQGEKLLNKLPYIDYIIGPDNLHVIENIIENQVSHRIFTDENPEVANINLPVKRKDCVKAWVNIIYGCNNYCTYCVVPYTRGKERSRPVDDIIKEISLLAEQGYKEVTLLGQNVNSYKDGNTNFPLLLEKVEKIEGIKRIRFITSHPKDLSKELVDVMKDYKKICEHIHLPLQAGSNKILKLMNRKYTYEEYFEKICWLREAIPDIAITSDIIVGFPQEQHEDFEKTINALKEIRFDGIFAFKFSPRLGTAAAKLDGHISEEVKAARLIEVLKLQDEITERKNKRLEGKIQEVLVEGKDEEGFTTGKTRTNKVVKIYSDIKAGEIVNVKIAKTHRHSLEGDIIST.

One can recognise an MTTase N-terminal domain in the interval 4-120 (RAVYIKTFGC…IENIIENQVS (117 aa)). [4Fe-4S] cluster contacts are provided by Cys13, Cys49, Cys83, Cys154, Cys158, and Cys161. Residues 140–367 (RKDCVKAWVN…LKLQDEITER (228 aa)) enclose the Radical SAM core domain. The TRAM domain occupies 370–430 (KRLEGKIQEV…RHSLEGDIIS (61 aa)).

Belongs to the methylthiotransferase family. MiaB subfamily. In terms of assembly, monomer. The cofactor is [4Fe-4S] cluster.

Its subcellular location is the cytoplasm. It carries out the reaction N(6)-dimethylallyladenosine(37) in tRNA + (sulfur carrier)-SH + AH2 + 2 S-adenosyl-L-methionine = 2-methylsulfanyl-N(6)-dimethylallyladenosine(37) in tRNA + (sulfur carrier)-H + 5'-deoxyadenosine + L-methionine + A + S-adenosyl-L-homocysteine + 2 H(+). Catalyzes the methylthiolation of N6-(dimethylallyl)adenosine (i(6)A), leading to the formation of 2-methylthio-N6-(dimethylallyl)adenosine (ms(2)i(6)A) at position 37 in tRNAs that read codons beginning with uridine. The sequence is that of tRNA-2-methylthio-N(6)-dimethylallyladenosine synthase from Thermodesulfovibrio yellowstonii (strain ATCC 51303 / DSM 11347 / YP87).